Reading from the N-terminus, the 259-residue chain is Proteasome subunit alpha (259 aa).

Belongs to the peptidase T1A family. The 20S proteasome core is composed of 14 alpha and 14 beta subunits that assemble into four stacked heptameric rings, resulting in a barrel-shaped structure. The two inner rings, each composed of seven catalytic beta subunits, are sandwiched by two outer rings, each composed of seven alpha subunits. The catalytic chamber with the active sites is on the inside of the barrel. Has a gated structure, the ends of the cylinder being occluded by the N-termini of the alpha-subunits. Is capped at one or both ends by the proteasome regulatory ATPase, PAN.

It localises to the cytoplasm. The formation of the proteasomal ATPase PAN-20S proteasome complex, via the docking of the C-termini of PAN into the intersubunit pockets in the alpha-rings, triggers opening of the gate for substrate entry. Interconversion between the open-gate and close-gate conformations leads to a dynamic regulation of the 20S proteasome proteolysis activity. Its function is as follows. Component of the proteasome core, a large protease complex with broad specificity involved in protein degradation. The chain is Proteasome subunit alpha from Methanococcus maripaludis (strain C7 / ATCC BAA-1331).